Consider the following 155-residue polypeptide: 6,7-dimethyl-8-ribityllumazine synthase (155 aa).

Residues Phe24, 58–60, and 82–84 contribute to the 5-amino-6-(D-ribitylamino)uracil site; these read AFE and AII. 87 to 88 contributes to the (2S)-2-hydroxy-3-oxobutyl phosphate binding site; sequence ST. His90 functions as the Proton donor in the catalytic mechanism. A 5-amino-6-(D-ribitylamino)uracil-binding site is contributed by Phe115. Arg129 provides a ligand contact to (2S)-2-hydroxy-3-oxobutyl phosphate.

The protein belongs to the DMRL synthase family.

The catalysed reaction is (2S)-2-hydroxy-3-oxobutyl phosphate + 5-amino-6-(D-ribitylamino)uracil = 6,7-dimethyl-8-(1-D-ribityl)lumazine + phosphate + 2 H2O + H(+). The protein operates within cofactor biosynthesis; riboflavin biosynthesis; riboflavin from 2-hydroxy-3-oxobutyl phosphate and 5-amino-6-(D-ribitylamino)uracil: step 1/2. Its function is as follows. Catalyzes the formation of 6,7-dimethyl-8-ribityllumazine by condensation of 5-amino-6-(D-ribitylamino)uracil with 3,4-dihydroxy-2-butanone 4-phosphate. This is the penultimate step in the biosynthesis of riboflavin. This chain is 6,7-dimethyl-8-ribityllumazine synthase, found in Chlorobium phaeovibrioides (strain DSM 265 / 1930) (Prosthecochloris vibrioformis (strain DSM 265)).